The following is a 349-amino-acid chain: 2-oxoglutarate-Fe(II) type oxidoreductase ppzD (349 aa).

One can recognise a Fe2OG dioxygenase domain in the interval 200–311 (NTSELRLNHY…RYSVAYFGKP (112 aa)). Positions 227, 229, and 287 each coordinate Fe cation. Arg302 provides a ligand contact to 2-oxoglutarate.

The protein belongs to the iron/ascorbate-dependent oxidoreductase family. Fe(2+) serves as cofactor.

It catalyses the reaction L-proline + 2-oxoglutarate + O2 = trans-4-hydroxy-L-proline + succinate + CO2. It carries out the reaction L-proline + 2-oxoglutarate + O2 = trans-3-hydroxy-L-proline + succinate + CO2. The enzyme catalyses D-proline + 2-oxoglutarate + O2 = cis-4-hydroxy-D-proline + succinate + CO2. Its pathway is secondary metabolite biosynthesis. Its function is as follows. 2-oxoglutarate-Fe(II) type oxidoreductase; part of the gene cluster that mediates the biosynthesis of pyrrolopyrazines, secondary metabolites showing insecticidal activity. Within the pathway, ppzD converts L-proline into trans-4-hydroxy-L-proline as a major product, yielding a key precursor for peramine biosynthesis. PpzD is also able to convert L-proline into trans-3-hydroxy-L-proline. The single multifunctional NRPS ppzA is sufficient to produce peramine via condensation of 1-pyrroline-5-carboxylate and arginine, N-methylation of the alpha-amino group of arginine and reduction of the thioester and the cyclization to form an iminium ion resulting in release from the peptide synthetase. Deprotonation of this intermediate and oxidation of the pyrroline ring would give rise to peramine. In Epichloe species that produce only peramine, the peramine synthetase gene is not localized in a gene cluster, in contrast to Metarhizium species that contain additional pyrrolopyrazine biosynthesis genes. The 2-oxoglutarate-Fe(II) type oxidoreductase ppzC hydroxylates peramine to yield the newly identified compound 8-hydroxyperamine whereas ppzD converts L-proline into trans-4-hydroxy-L-proline, a precursor of peramine biosynthesis. This chain is 2-oxoglutarate-Fe(II) type oxidoreductase ppzD (ppzD), found in Metarhizium majus (strain ARSEF 297).